Here is a 417-residue protein sequence, read N- to C-terminus: Serine hydroxymethyltransferase 2 (417 aa).

(6S)-5,6,7,8-tetrahydrofolate contacts are provided by residues Leu121 and 125-127 (GHL). Lys230 carries the post-translational modification N6-(pyridoxal phosphate)lysine. Residue 355 to 357 (SPF) coordinates (6S)-5,6,7,8-tetrahydrofolate.

It belongs to the SHMT family. In terms of assembly, homodimer. The cofactor is pyridoxal 5'-phosphate.

Its subcellular location is the cytoplasm. It carries out the reaction (6R)-5,10-methylene-5,6,7,8-tetrahydrofolate + glycine + H2O = (6S)-5,6,7,8-tetrahydrofolate + L-serine. Its pathway is one-carbon metabolism; tetrahydrofolate interconversion. It participates in amino-acid biosynthesis; glycine biosynthesis; glycine from L-serine: step 1/1. Its function is as follows. Catalyzes the reversible interconversion of serine and glycine with tetrahydrofolate (THF) serving as the one-carbon carrier. This reaction serves as the major source of one-carbon groups required for the biosynthesis of purines, thymidylate, methionine, and other important biomolecules. Also exhibits THF-independent aldolase activity toward beta-hydroxyamino acids, producing glycine and aldehydes, via a retro-aldol mechanism. This is Serine hydroxymethyltransferase 2 from Pseudomonas fluorescens (strain ATCC BAA-477 / NRRL B-23932 / Pf-5).